Consider the following 861-residue polypeptide: Valine--tRNA ligase (861 aa).

The 'HIGH' region motif lies at Pro42–His52. The 'KMSKS' region motif lies at Lys521 to Ser525. Lys524 serves as a coordination point for ATP. The stretch at Val792–Met861 forms a coiled coil.

This sequence belongs to the class-I aminoacyl-tRNA synthetase family. ValS type 1 subfamily. As to quaternary structure, monomer.

The protein resides in the cytoplasm. It catalyses the reaction tRNA(Val) + L-valine + ATP = L-valyl-tRNA(Val) + AMP + diphosphate. Its function is as follows. Catalyzes the attachment of valine to tRNA(Val). As ValRS can inadvertently accommodate and process structurally similar amino acids such as threonine, to avoid such errors, it has a 'posttransfer' editing activity that hydrolyzes mischarged Thr-tRNA(Val) in a tRNA-dependent manner. In Pseudothermotoga lettingae (strain ATCC BAA-301 / DSM 14385 / NBRC 107922 / TMO) (Thermotoga lettingae), this protein is Valine--tRNA ligase.